The following is a 95-amino-acid chain: Alpha-defensin 20 (95 aa).

The signal sequence occupies residues 1–19; that stretch reads MKTLVLLSALVLLAFQVQA. A propeptide spanning residues 20–58 is cleaved from the precursor; that stretch reads DPIQNTDEETNTEEQPGEEDQAVSVSFGDPEGSALHEKS. A disordered region spans residues 22–57; sequence IQNTDEETNTEEQPGEEDQAVSVSFGDPEGSALHEK. A compositionally biased stretch (acidic residues) spans 25–40; that stretch reads TDEETNTEEQPGEEDQ. Disulfide bonds link cysteine 64–cysteine 89, cysteine 66–cysteine 81, and cysteine 71–cysteine 88.

This sequence belongs to the alpha-defensin family.

It is found in the secreted. Functionally, may have microbicidal activities. In Mus musculus (Mouse), this protein is Alpha-defensin 20 (Defa20).